The chain runs to 513 residues: Catalase (513 aa).

Positions 1–30 (MNPSLNAFRPGRLLVAASLTASLLSLSVQA) are cleaved as a signal peptide. Active-site residues include H81 and N153. Heme is bound at residue Y361. Residues 391-407 (DGALNAGHSTSGVNYQP) are compositionally biased toward polar residues. Positions 391–413 (DGALNAGHSTSGVNYQPSRLDPR) are disordered.

This sequence belongs to the catalase family. Heme is required as a cofactor.

The protein localises to the periplasm. The enzyme catalyses 2 H2O2 = O2 + 2 H2O. Decomposes hydrogen peroxide into water and oxygen; serves to protect cells from the toxic effects of hydrogen peroxide. The chain is Catalase (katB) from Pseudomonas aeruginosa (strain ATCC 15692 / DSM 22644 / CIP 104116 / JCM 14847 / LMG 12228 / 1C / PRS 101 / PAO1).